The sequence spans 3433 residues: Genome polyprotein (3433 aa).

The interaction with host EXOC1 stretch occupies residues 2–15; sequence SKKPGGPGKSRAVN. At 2 to 105 the chain is on the cytoplasmic side; the sequence is SKKPGGPGKS…NRRSSKQKKR (104 aa). The hydrophobic; homodimerization of capsid protein C stretch occupies residues 37–72; that stretch reads LIDGRGPTRFVLALLAFFRFTAIAPTRAVLDRWRSV. The propeptide at 106 to 123 is ER anchor for the capsid protein C, removed in mature form by serine protease NS3; the sequence is GGKTGIAFMIGLIAGVGA. A helical membrane pass occupies residues 106–126; sequence GGKTGIAFMIGLIAGVGAVTL. The Extracellular portion of the chain corresponds to 127-248; that stretch reads SNFQGKVMMT…KATRYLVKTE (122 aa). Residue N138 is glycosylated (N-linked (GlcNAc...) asparagine; by host). Residues 249–269 traverse the membrane as a helical segment; that stretch reads SWILRNPGYALVAAVIGWMLG. Topologically, residues 270–273 are cytoplasmic; that stretch reads SNTM. Residues 274–290 traverse the membrane as a helical segment; the sequence is QRVVFAVLLLLVAPAYS. Residues 291–743 are Extracellular-facing; the sequence is FNCLGMSNRD…QVFGGAFRSL (453 aa). 4 disulfide bridges follow: C293-C320, C350-C406, C364-C395, and C382-C411. Positions 388–401 are fusion peptide; the sequence is DRGWGNGCGLFGKG. A glycan (N-linked (GlcNAc...) asparagine; by host) is linked at N444. Intrachain disulfides connect C480–C578 and C595–C626. Residues 744 to 764 form a helical membrane-spanning segment; that stretch reads FGGMSWITQGLLGALLLWMGI. Residues 765–770 are Cytoplasmic-facing; it reads NARDRS. Residues 771 to 791 traverse the membrane as a helical segment; sequence IALTFLAVGGVLLFLSVNVHA. The Extracellular portion of the chain corresponds to 792-1216; it reads DTGCAIDISR…AFAESNSGGD (425 aa). Intrachain disulfides connect C795–C806 and C846–C934. N-linked (GlcNAc...) asparagine; by host glycans are attached at residues N921, N966, and N998. Disulfide bonds link C970–C1014, C1071–C1120, C1082–C1103, and C1104–C1107. The helical transmembrane segment at 1217-1237 threads the bilayer; the sequence is VVHLALMATFKIQPVFMVASF. Residues 1238–1247 are Cytoplasmic-facing; that stretch reads LKARWTNQEN. The chain crosses the membrane as a helical span at residues 1248–1268; that stretch reads ILLMLAAAFFQMAYYDARQIL. The Lumenal portion of the chain corresponds to 1269–1288; that stretch reads LWEMPDVLNSLAVAWMILRA. The helical transmembrane segment at 1289 to 1309 threads the bilayer; sequence ITFTTTSNVVVPLLALLTPGL. Topologically, residues 1310-1316 are cytoplasmic; it reads RCLNLDV. Residues 1317-1335 traverse the membrane as a helical segment; it reads YRILLLMVGIGSLIREKRS. Residues 1336–1345 are Lumenal-facing; that stretch reads AAAKKKGASL. A helical membrane pass occupies residues 1346-1366; that stretch reads LCLALASTGFFNPMILAAGLV. Residues 1367 to 1375 lie on the Cytoplasmic side of the membrane; sequence ACDPNRKRG. Residues 1376–1396 form a helical membrane-spanning segment; it reads WPATEVMTAVGLMFAIVGGLA. Residues 1397–1399 are Lumenal-facing; the sequence is ELD. A helical membrane pass occupies residues 1400–1420; the sequence is IDSMAIPMTIAGLMFAAFVIS. The Cytoplasmic segment spans residues 1421–1477; sequence GKSTDMWIERTADISWEGDAEITGSSERVDVRLDDDGNFQLMNDPGAPWKIWMLRMA. The segment at 1428–1467 is interacts with and activates NS3 protease; that stretch reads IERTADISWEGDAEITGSSERVDVRLDDDGNFQLMNDPGA. An intramembrane region (helical) is located at residues 1478 to 1498; sequence CLAISAYTPWAILPSVVGFWI. Residues 1499 to 2174 lie on the Cytoplasmic side of the membrane; that stretch reads TLQYTKRGGV…RMALEELPDA (676 aa). Positions 1506 to 1683 constitute a Peptidase S7 domain; sequence GGVLWDTPSP…ERMDEPVPAG (178 aa). Residues H1556, D1580, and S1640 each act as charge relay system; for serine protease NS3 activity in the active site. The 157-residue stretch at 1686 to 1842 folds into the Helicase ATP-binding domain; sequence PEMLRKKQIT…ESNAPISDLQ (157 aa). The important for RNA-binding stretch occupies residues 1690 to 1693; that stretch reads RKKQ. ATP is bound at residue 1699 to 1706; that stretch reads LHPGAGKT. The DEAH box motif lies at 1790–1793; that stretch reads DEAH. Residues 1853 to 2018 form the Helicase C-terminal domain; the sequence is GYEWITEYIG…GLIAQFYQPE (166 aa). An N6-acetyllysine; by host modification is found at K1894. The regulates the ATPase activity of NS3 helicase stretch occupies residues 2169–2173; it reads EELPD. The chain crosses the membrane as a helical span at residues 2175 to 2195; that stretch reads LQTIALIALLSVMTMGVFFLL. The Lumenal segment spans residues 2196–2200; that stretch reads MQRKG. An intramembrane region (helical) is located at residues 2201–2221; it reads IGKIGLGGVVLGAATFFCWMA. Position 2222 (E2222) is a topological domain, lumenal. Residues 2223–2243 form a helical membrane-spanning segment; sequence VPGTKIAGMLLLSLLLMIVLI. Over 2244-2258 the chain is Cytoplasmic; sequence PEPEKQRSQTDNQLA. The chain crosses the membrane as a helical span at residues 2259-2273; sequence VFLICVLTLVGAVAA. At 2274–2312 the chain is on the lumenal side; the sequence is NEMGWLDKTKSDISGLFGQRIETKENFSIGEFLLDLRPA. Positions 2313–2333 form an intramembrane region, helical; it reads TAWSLYAVTTAVLTPLLKHLI. Over 2334–2380 the chain is Lumenal; sequence TSDYITTSLTSINVQASALFTLARGFPFVDVGVSALLLAAGCWGQVT. A helical membrane pass occupies residues 2381–2401; the sequence is LTVTVTSATLLFCHYAYMVPG. Residues 2402–2444 are Cytoplasmic-facing; that stretch reads WQAEAMRSAQRRTAAGIMKNAVVDGIVATDVPELERTTPIMQK. The chain crosses the membrane as a helical span at residues 2445–2465; it reads KVGQVMLILVSLAALVVNPSV. The Lumenal segment spans residues 2466-2470; it reads KTVRE. A helical membrane pass occupies residues 2471–2491; it reads AGILITAAAVTLWENGASSVW. Over 2492-3433 the chain is Cytoplasmic; sequence NATTAIGLCH…DTTLVEDTVL (942 aa). The 266-residue stretch at 2529 to 2794 folds into the mRNA cap 0-1 NS5-type MT domain; sequence GGAKGRTLGE…DVNLGSGTRA (266 aa). S2584 contacts S-adenosyl-L-methionine. At S2584 the chain carries Phosphoserine. K2589 (for 2'-O-MTase activity) is an active-site residue. S-adenosyl-L-methionine is bound by residues G2614, W2615, T2632, K2633, D2659, and V2660. D2674 (for 2'-O-MTase activity) is an active-site residue. I2675 contacts S-adenosyl-L-methionine. Residues K2710 and E2746 each act as for 2'-O-MTase activity in the active site. S-adenosyl-L-methionine is bound at residue Y2748. The Nuclear localization signal signature appears at 2917-2919; sequence REK. 4 residues coordinate Zn(2+): E2968, H2972, C2977, and C2980. The RdRp catalytic domain occupies 3058 to 3210; it reads GRIYADDTAG…KPLDDRFATS (153 aa). The Zn(2+) site is built by H3245, C3261, and C3380. Residues 3431 to 3433 carry the PDZ-binding motif; the sequence is TVL.

This sequence in the N-terminal section; belongs to the class I-like SAM-binding methyltransferase superfamily. mRNA cap 0-1 NS5-type methyltransferase family. Homodimer; further assembles as a homotetramer. Interacts (via N-terminus) with host EXOC1 (via C-terminus); this interaction results in EXOC1 degradation through the proteasome degradation pathway. As to quaternary structure, forms heterodimers with envelope protein E in the endoplasmic reticulum and Golgi. In terms of assembly, homodimer; in the endoplasmic reticulum and Golgi. Interacts with protein prM. Interacts with non-structural protein 1. Homodimer; Homohexamer when secreted. Interacts with envelope protein E. NS1 interacts with NS4B. Interacts with host complement protein CFH; this interaction leads to the degradation of C3. As to quaternary structure, interacts (via N-terminus) with serine protease NS3. In terms of assembly, forms a heterodimer with serine protease NS3. May form homooligomers. Forms a heterodimer with NS2B. Interacts with non-structural protein 2A (via N-terminus). Interacts with NS4B. Interacts with unphosphorylated RNA-directed RNA polymerase NS5; this interaction stimulates RNA-directed RNA polymerase NS5 guanylyltransferase activity. As to quaternary structure, interacts with Serine protease/Helicase NS3. Interacts with NS1. In terms of assembly, homodimer. Interacts with host STAT2; this interaction inhibits the phosphorylation of the latter, and, when all viral proteins are present (polyprotein), targets STAT2 for degradation. Interacts with serine protease NS3. In terms of processing, specific enzymatic cleavages in vivo yield mature proteins. Cleavages in the lumen of endoplasmic reticulum are performed by host signal peptidase, whereas cleavages in the cytoplasmic side are performed by serine protease NS3. Signal cleavage at the 2K-4B site requires a prior NS3 protease-mediated cleavage at the 4A-2K site. Cleaved in post-Golgi vesicles by a host furin, releasing the mature small envelope protein M, and peptide pr. This cleavage is incomplete as up to 30% of viral particles still carry uncleaved prM. Post-translationally, N-glycosylated. In terms of processing, N-glycosylated. The excreted form is glycosylated and this is required for efficient secretion of the protein from infected cells. Acetylated by host KAT5. Acetylation modulates NS3 RNA-binding and unwinding activities and plays an important positive role for viral replication. Post-translationally, phosphorylated on serines residues. This phosphorylation may trigger NS5 nuclear localization.

The protein resides in the virion. The protein localises to the host nucleus. It is found in the host cytoplasm. It localises to the host perinuclear region. Its subcellular location is the secreted. The protein resides in the virion membrane. The protein localises to the host endoplasmic reticulum membrane. It carries out the reaction Selective hydrolysis of -Xaa-Xaa-|-Yaa- bonds in which each of the Xaa can be either Arg or Lys and Yaa can be either Ser or Ala.. The enzyme catalyses RNA(n) + a ribonucleoside 5'-triphosphate = RNA(n+1) + diphosphate. It catalyses the reaction a ribonucleoside 5'-triphosphate + H2O = a ribonucleoside 5'-diphosphate + phosphate + H(+). The catalysed reaction is ATP + H2O = ADP + phosphate + H(+). It carries out the reaction a 5'-end (5'-triphosphoguanosine)-ribonucleoside in mRNA + S-adenosyl-L-methionine = a 5'-end (N(7)-methyl 5'-triphosphoguanosine)-ribonucleoside in mRNA + S-adenosyl-L-homocysteine. The enzyme catalyses a 5'-end (N(7)-methyl 5'-triphosphoguanosine)-ribonucleoside in mRNA + S-adenosyl-L-methionine = a 5'-end (N(7)-methyl 5'-triphosphoguanosine)-(2'-O-methyl-ribonucleoside) in mRNA + S-adenosyl-L-homocysteine + H(+). Functionally, plays a role in virus budding by binding to the cell membrane and gathering the viral RNA into a nucleocapsid that forms the core of a mature virus particle. During virus entry, may induce genome penetration into the host cytoplasm after hemifusion induced by the surface proteins. Can migrate to the cell nucleus where it modulates host functions. Overcomes the anti-viral effects of host EXOC1 by sequestering and degrading the latter through the proteasome degradation pathway. Inhibits RNA silencing by interfering with host Dicer. In terms of biological role, prevents premature fusion activity of envelope proteins in trans-Golgi by binding to envelope protein E at pH6.0. After virion release in extracellular space, gets dissociated from E dimers. Its function is as follows. Acts as a chaperone for envelope protein E during intracellular virion assembly by masking and inactivating envelope protein E fusion peptide. prM is the only viral peptide matured by host furin in the trans-Golgi network probably to avoid catastrophic activation of the viral fusion activity in acidic Golgi compartment prior to virion release. prM-E cleavage is inefficient, and many virions are only partially matured. These uncleaved prM would play a role in immune evasion. Functionally, may play a role in virus budding. Exerts cytotoxic effects by activating a mitochondrial apoptotic pathway through M ectodomain. May display a viroporin activity. Binds to host cell surface receptor and mediates fusion between viral and cellular membranes. Envelope protein is synthesized in the endoplasmic reticulum in the form of heterodimer with protein prM. They play a role in virion budding in the ER, and the newly formed immature particle is covered with 60 spikes composed of heterodimer between precursor prM and envelope protein E. The virion is transported to the Golgi apparatus where the low pH causes dissociation of PrM-E heterodimers and formation of E homodimers. prM-E cleavage is inefficient, and many virions are only partially matured. These uncleaved prM would play a role in immune evasion. In terms of biological role, involved in immune evasion, pathogenesis and viral replication. Once cleaved off the polyprotein, is targeted to three destinations: the viral replication cycle, the plasma membrane and the extracellular compartment. Essential for viral replication. Required for formation of the replication complex and recruitment of other non-structural proteins to the ER-derived membrane structures. Excreted as a hexameric lipoparticle that plays a role against host immune response. Antagonizing the complement function. Binds to the host macrophages and dendritic cells. Inhibits signal transduction originating from Toll-like receptor 3 (TLR3). Its function is as follows. Component of the viral RNA replication complex that functions in virion assembly and antagonizes the host alpha/beta interferon antiviral response. Inhibits STAT2 translocation in the nucleus after IFN-alpha treatment. Functionally, required cofactor for the serine protease function of NS3. May have membrane-destabilizing activity and form viroporins. Inhibits STAT2 translocation in the nucleus after IFN-alpha treatment. Displays three enzymatic activities: serine protease, NTPase and RNA helicase. NS3 serine protease, in association with NS2B, performs its autocleavage and cleaves the polyprotein at dibasic sites in the cytoplasm: C-prM, NS2A-NS2B, NS2B-NS3, NS3-NS4A, NS4A-2K and NS4B-NS5. NS3 RNA helicase binds RNA and unwinds dsRNA in the 3' to 5' direction. NS3 supports the separation of RNA daughter and template strands during viral replication. The helicase part is involved in the inhibition of phosphorylation of host STAT1, and thereby inhibition of host type-I IFN signaling. In addition, NS3 assists the initiation of replication by unwinding the RNA secondary structure in the 3' non-translated region (NTR). Inhibits STAT2 translocation in the nucleus after IFN-alpha treatment. In terms of biological role, regulates the ATPase activity of the NS3 helicase activity. NS4A allows NS3 helicase to conserve energy during unwinding. Induces host ER membrane rearrangements to provide a compartment where viral replication can take part. Inhibits STAT2 translocation in the nucleus after IFN-alpha treatment. Its function is as follows. Functions as a signal peptide for NS4B and is required for the interferon antagonism activity of the latter. Functionally, induces the formation of ER-derived membrane vesicles where the viral replication takes place. Inhibits interferon (IFN)-induced host STAT1 phosphorylation and nuclear translocation, thereby preventing the establishment of cellular antiviral state by blocking the IFN-alpha/beta pathway. Inhibits STAT2 translocation in the nucleus after IFN-alpha treatment. Replicates the viral (+) and (-) genome, and performs the capping of genomes in the cytoplasm. NS5 methylates viral RNA cap at guanine N-7 and ribose 2'-O positions. Besides its role in genome replication, also prevents the establishment of cellular antiviral state by blocking the interferon-alpha/beta (IFN-alpha/beta) signaling pathway. Inhibits host JAK1 and TYK2 phosphorylation, thereby preventing activation of JAK-STAT signaling pathway. May transcriptionally regulate host genes involved in antiviral response when localized in the nucleus. The polypeptide is Genome polyprotein (Ciconiiformes (storks and others)).